The sequence spans 260 residues: MICOS complex subunit mic25-a (260 aa).

The tract at residues 1–92 (MGGSESTGRK…KPTARGVGHQ (92 aa)) is disordered. Gly-2 carries the N-myristoyl glycine lipid modification. Basic and acidic residues predominate over residues 28 to 39 (RLSDEVVNRMKD). Positions 48–64 (STSTASGTTSGPTTFPS) are enriched in low complexity. Positions 94–187 (AEEDLYRRYE…LNSIEKKNLE (94 aa)) form a coiled coil. The region spanning 213–255 (DPVCMDLQSNILKCYAENKQERLNCSDLAKEYGKCVSAAQKNL) is the CHCH domain. 2 consecutive short sequence motifs (cx9C motif) follow at residues 216–226 (CMDLQSNILKC) and 237–247 (CSDLAKEYGKC). Intrachain disulfides connect Cys-216-Cys-247 and Cys-226-Cys-237.

It belongs to the MICOS complex subunit Mic19 family. Metazoan Mic25 subfamily. Component of the mitochondrial contact site and cristae organizing system (MICOS) complex (also known as MINOS or MitOS complex).

The protein localises to the mitochondrion inner membrane. Its function is as follows. Component of the MICOS complex, a large protein complex of the mitochondrial inner membrane that plays crucial roles in the maintenance of crista junctions, inner membrane architecture, and formation of contact sites to the outer membrane. This chain is MICOS complex subunit mic25-a (chchd6-a), found in Xenopus laevis (African clawed frog).